The sequence spans 177 residues: ATP-dependent protease subunit HslV (177 aa).

The active site involves Thr-2. Na(+)-binding residues include Gly-157, Cys-160, and Thr-163.

It belongs to the peptidase T1B family. HslV subfamily. As to quaternary structure, a double ring-shaped homohexamer of HslV is capped on each side by a ring-shaped HslU homohexamer. The assembly of the HslU/HslV complex is dependent on binding of ATP.

The protein localises to the cytoplasm. It catalyses the reaction ATP-dependent cleavage of peptide bonds with broad specificity.. With respect to regulation, allosterically activated by HslU binding. In terms of biological role, protease subunit of a proteasome-like degradation complex believed to be a general protein degrading machinery. In Aeromonas salmonicida (strain A449), this protein is ATP-dependent protease subunit HslV.